The chain runs to 241 residues: tRNA (guanine-N(7)-)-methyltransferase (241 aa).

Residues 1–20 (MTESNDTPIQPEAGDERQHR) form a disordered region. Glu-71, Glu-96, Asp-123, and Asp-146 together coordinate S-adenosyl-L-methionine. Asp-146 is a catalytic residue. Residues Lys-150, Asp-182, and 219-222 (TKFE) contribute to the substrate site.

Belongs to the class I-like SAM-binding methyltransferase superfamily. TrmB family.

The catalysed reaction is guanosine(46) in tRNA + S-adenosyl-L-methionine = N(7)-methylguanosine(46) in tRNA + S-adenosyl-L-homocysteine. The protein operates within tRNA modification; N(7)-methylguanine-tRNA biosynthesis. Its function is as follows. Catalyzes the formation of N(7)-methylguanine at position 46 (m7G46) in tRNA. This chain is tRNA (guanine-N(7)-)-methyltransferase, found in Pseudomonas fluorescens (strain ATCC BAA-477 / NRRL B-23932 / Pf-5).